An 89-amino-acid polypeptide reads, in one-letter code: Small ribosomal subunit protein uS15 (89 aa).

The protein belongs to the universal ribosomal protein uS15 family. As to quaternary structure, part of the 30S ribosomal subunit. Forms a bridge to the 50S subunit in the 70S ribosome, contacting the 23S rRNA.

One of the primary rRNA binding proteins, it binds directly to 16S rRNA where it helps nucleate assembly of the platform of the 30S subunit by binding and bridging several RNA helices of the 16S rRNA. Its function is as follows. Forms an intersubunit bridge (bridge B4) with the 23S rRNA of the 50S subunit in the ribosome. This chain is Small ribosomal subunit protein uS15, found in Nitrosomonas eutropha (strain DSM 101675 / C91 / Nm57).